Here is a 232-residue protein sequence, read N- to C-terminus: Ribose-5-phosphate isomerase A (232 aa).

Substrate contacts are provided by residues 34–37 (TGST), 89–92 (DGAD), and 102–105 (KGGG). Glu-111 serves as the catalytic Proton acceptor. A substrate-binding site is contributed by Lys-129.

The protein belongs to the ribose 5-phosphate isomerase family. Homodimer.

The enzyme catalyses aldehydo-D-ribose 5-phosphate = D-ribulose 5-phosphate. It participates in carbohydrate degradation; pentose phosphate pathway; D-ribose 5-phosphate from D-ribulose 5-phosphate (non-oxidative stage): step 1/1. Functionally, catalyzes the reversible conversion of ribose-5-phosphate to ribulose 5-phosphate. The polypeptide is Ribose-5-phosphate isomerase A (Protochlamydia amoebophila (strain UWE25)).